The primary structure comprises 488 residues: MNSLYIAGVWQDGQGEVVNSLNPVTQQVLWSGRGASAAQVEQAVQAARQAFPGWALLSLDQRIAVLEAFAARLKHHADALAQCIGEETGKPLWESATEVTSMVNKIAISVQSYRERTGEKSGPLGDATAVLRHKPHGVVAVFGPYNFPGHLPNGHIVPALLAGNVVLFKPSELTPKVAELTVKCWIEAGLPAGVLNLLQGGRETGIALAANPGIDGLFFTGSSRTGNALHQQFAGRPDKILALEMGGNNPLIVDQVQDIDAAVYTIIQSAFISAGQRCTCARRLLVPEGDWGDALLARLVGVSATIEAGAFDQQPAPFMGSVISLEAARALLDAQRNLLANGALTLLEMRQPQPGAALLTPGIIDVSAVPERPDEELFGPLLQVIRYAGFDAAIAEANATRYGLAAGLLSDSEARYQQFWLHSRAGIVNWNKPLTGAASSAPFGGVGASGNHRASAYYAADYCAYPVASLEAGSLTLPATLTPGIRLS.

221 to 226 (GSSRTG) contributes to the NAD(+) binding site. Active-site residues include Glu244 and Cys278.

Belongs to the aldehyde dehydrogenase family. AstD subfamily.

The enzyme catalyses N-succinyl-L-glutamate 5-semialdehyde + NAD(+) + H2O = N-succinyl-L-glutamate + NADH + 2 H(+). It functions in the pathway amino-acid degradation; L-arginine degradation via AST pathway; L-glutamate and succinate from L-arginine: step 4/5. In terms of biological role, catalyzes the NAD-dependent reduction of succinylglutamate semialdehyde into succinylglutamate. The protein is N-succinylglutamate 5-semialdehyde dehydrogenase of Pseudomonas syringae pv. syringae (strain B728a).